Here is a 450-residue protein sequence, read N- to C-terminus: Divalent metal cation transporter MntH (450 aa).

11 helical membrane passes run L34–I54, G59–L81, I108–V128, I141–M161, A170–S190, G212–L232, I263–F283, P305–A325, S361–I381, Q383–L403, and V422–V442.

The protein belongs to the NRAMP family.

It is found in the cell membrane. Functionally, h(+)-stimulated, divalent metal cation uptake system. This Staphylococcus aureus (strain MRSA252) protein is Divalent metal cation transporter MntH.